A 389-amino-acid chain; its full sequence is Large envelope protein (389 aa).

An N-acetylmethionine modification is found at M1. G2 carries N-myristoyl glycine; by host lipidation. A pre-S1 region spans residues 2-108 (GTNLSVPNPL…PPLRDSHPQA (107 aa)). Residues 2-163 (GTNLSVPNPL…SARTGDPVTI (162 aa)) are pre-S. At 2 to 170 (GTNLSVPNPL…VTIMENITSG (169 aa)) the chain is on the virion surface; in external conformation side. Residues 2 to 242 (GTNLSVPNPL…PGYRWMCLRR (241 aa)) lie on the Intravirion; in internal conformation side of the membrane. Polar residues predominate over residues 77–95 (VSTIPPPASTNRQSGRQPT). Residues 77–103 (VSTIPPPASTNRQSGRQPTPISPPLRD) form a disordered region. Positions 109–163 (MQWNSTALHQALQDPRVRGLYLPAGGSSSGTVNPAPNIASHISSISARTGDPVTI) are pre-S2. A helical membrane pass occupies residues 171–191 (FLGPLLVLQAGFFLLTRILTI). At 192–242 (PQSLDSWWTSLNFLGGSPVCLGQNSQSPTSNHSPTSCPPICPGYRWMCLRR) the chain is on the intravirion; in external conformation side. A helical transmembrane segment spans residues 243 to 263 (FIIFLFILLLCLIFLLVLLDY). The Virion surface portion of the chain corresponds to 264 to 337 (QGMLPVCPLI…WASVRFSWLS (74 aa)). N309 is a glycosylation site (N-linked (GlcNAc...) asparagine; by host). Residues 338–358 (LLVPFVQWFVGLSPTVWLSAI) traverse the membrane as a helical segment. Residues 359–364 (WMMWYW) lie on the Intravirion side of the membrane. Residues 365 to 387 (GPSLYSIVSPFIPLLPIFFCLWV) form a helical membrane-spanning segment. The Virion surface portion of the chain corresponds to 388–389 (YI).

Belongs to the orthohepadnavirus major surface antigen family. In its internal form (Li-HBsAg), interacts with the capsid protein and with the isoform S. Interacts with host chaperone CANX. As to quaternary structure, associates with host chaperone CANX through its pre-S2 N glycan; this association may be essential for isoform M proper secretion. In terms of assembly, interacts with isoform L. Interacts with the antigens of satellite virus HDV (HDVAgs); this interaction is required for encapsidation of HDV genomic RNA. Post-translationally, isoform M is N-terminally acetylated by host at a ratio of 90%, and N-glycosylated by host at the pre-S2 region. In terms of processing, myristoylated.

It localises to the virion membrane. In terms of biological role, the large envelope protein exists in two topological conformations, one which is termed 'external' or Le-HBsAg and the other 'internal' or Li-HBsAg. In its external conformation the protein attaches the virus to cell receptors and thereby initiating infection. This interaction determines the species specificity and liver tropism. This attachment induces virion internalization predominantly through caveolin-mediated endocytosis. The large envelope protein also assures fusion between virion membrane and endosomal membrane. In its internal conformation the protein plays a role in virion morphogenesis and mediates the contact with the nucleocapsid like a matrix protein. The middle envelope protein plays an important role in the budding of the virion. It is involved in the induction of budding in a nucleocapsid independent way. In this process the majority of envelope proteins bud to form subviral lipoprotein particles of 22 nm of diameter that do not contain a nucleocapsid. This chain is Large envelope protein, found in Hepatitis B virus genotype A2 subtype adw (isolate Japan/Nishioka/1983) (HBV-A).